The primary structure comprises 173 residues: Crossover junction endodeoxyribonuclease RuvC (173 aa).

Active-site residues include Asp8, Glu67, and Asp139. Mg(2+) contacts are provided by Asp8, Glu67, and Asp139.

The protein belongs to the RuvC family. In terms of assembly, homodimer which binds Holliday junction (HJ) DNA. The HJ becomes 2-fold symmetrical on binding to RuvC with unstacked arms; it has a different conformation from HJ DNA in complex with RuvA. In the full resolvosome a probable DNA-RuvA(4)-RuvB(12)-RuvC(2) complex forms which resolves the HJ. Mg(2+) is required as a cofactor.

It localises to the cytoplasm. The catalysed reaction is Endonucleolytic cleavage at a junction such as a reciprocal single-stranded crossover between two homologous DNA duplexes (Holliday junction).. In terms of biological role, the RuvA-RuvB-RuvC complex processes Holliday junction (HJ) DNA during genetic recombination and DNA repair. Endonuclease that resolves HJ intermediates. Cleaves cruciform DNA by making single-stranded nicks across the HJ at symmetrical positions within the homologous arms, yielding a 5'-phosphate and a 3'-hydroxyl group; requires a central core of homology in the junction. The consensus cleavage sequence is 5'-(A/T)TT(C/G)-3'. Cleavage occurs on the 3'-side of the TT dinucleotide at the point of strand exchange. HJ branch migration catalyzed by RuvA-RuvB allows RuvC to scan DNA until it finds its consensus sequence, where it cleaves and resolves the cruciform DNA. The protein is Crossover junction endodeoxyribonuclease RuvC of Shewanella frigidimarina (strain NCIMB 400).